Reading from the N-terminus, the 348-residue chain is Flagellar P-ring protein (348 aa).

An N-terminal signal peptide occupies residues 1 to 16 (MRVLTIFLLFMTSIFA).

It belongs to the FlgI family. As to quaternary structure, the basal body constitutes a major portion of the flagellar organelle and consists of four rings (L,P,S, and M) mounted on a central rod.

Its subcellular location is the periplasm. It localises to the bacterial flagellum basal body. Functionally, assembles around the rod to form the L-ring and probably protects the motor/basal body from shearing forces during rotation. The chain is Flagellar P-ring protein from Campylobacter jejuni subsp. doylei (strain ATCC BAA-1458 / RM4099 / 269.97).